Reading from the N-terminus, the 602-residue chain is MQTFQADLAIVGAGGAGLRAAIAAAQANPNAKIALISKVYPMRSHTVAAEGGSAAVAQDHDSFEYHFHDTVAGGDWLCEQDVVDYFVHHCPTEMTQLELWGCPWSRRPDGSVNVRRFGGMKIERTWFAADKTGFHMLHTLFQTSLQFPQIQRFDEHFVLDILVDDGHVRGLVAMNMMEGTLVQIRANAVVMATGGAGRVYRYNTNGGIVTGDGMGMALSHGVPLRDMEFVQYHPTGLPGSGILMTEGCRGEGGILVNKNGYRYLQDYGMGPETPLGEPKNKYMELGPRDKVSQAFWHEWRKGNTISTPRGDVVYLDLRHLGEKKLHERLPFICELAKAYVGVDPVKEPIPVRPTAHYTMGGIETDQNCETRIKGLFAVGECSSVGLHGANRLGSNSLAELVVFGRLAGEQATERAATAGNGNEAAIEAQAAGVEQRLKDLVNQDGGENWAKIRDEMGLAMEEGCGIYRTPELMQKTIDKLAELQERFKRVRITDTSSVFNTDLLYTIELGHGLNVAECMAHSAMARKESRGAHQRLDEGCTERDDVNFLKHTLAFRDADGTTRLEYSDVKITTLPPAKRVYGGEADAADKAEAANKKEKANG.

FAD-binding positions include glycine 12–alanine 16, isoleucine 36–lysine 38, serine 44–glycine 52, histidine 156–valine 158, alanine 192–threonine 193, and aspartate 212. Residue histidine 45 is modified to Tele-8alpha-FAD histidine. Residues histidine 233 and arginine 249 contribute to the active site. Residues histidine 356–tyrosine 357, glutamate 380, and arginine 391–leucine 397 each bind FAD. A disordered region spans residues tyrosine 581–glycine 602. Positions alanine 587–glycine 602 are enriched in basic and acidic residues.

It belongs to the FAD-dependent oxidoreductase 2 family. FRD/SDH subfamily. In terms of assembly, part of an enzyme complex containing four subunits: a flavoprotein (FrdA), an iron-sulfur protein (FrdB), and two hydrophobic anchor proteins (FrdC and FrdD). Can be cross-linked to SdhE. Purified from membrane fractions associated with protoporphyrinogen IX dehydrogenase (hemG). FAD serves as cofactor.

It is found in the cell inner membrane. The enzyme catalyses a quinone + succinate = fumarate + a quinol. It catalyses the reaction a menaquinone + succinate = a menaquinol + fumarate. Inhibited by oxaloacetate, a substrate analog. In terms of biological role, two distinct, membrane-bound, FAD-containing enzymes are responsible for the catalysis of fumarate and succinate interconversion; fumarate reductase is used during anaerobic growth, and succinate dehydrogenase is used during aerobic growth. The QFR enzyme complex binds 2 quinones in or near the membrane; 1 near the [3Fe-4S] cluster (QP is proximal to the [3Fe-4S] cluster, on the cytoplasmic side of the membrane) while QD (the distal cluster) is on the other side of the membrane. It is not clear if both of the quinol-binding sites are functionally relevant. This is Fumarate reductase flavoprotein subunit (frdA) from Escherichia coli (strain K12).